The primary structure comprises 280 residues: uncharacterized protein (280 aa).

N-linked (GlcNAc...) asparagine; by host glycosylation is found at Asn-75, Asn-98, Asn-107, Asn-143, Asn-158, Asn-170, Asn-192, Asn-207, Asn-224, and Asn-230. The helical transmembrane segment at 235–255 (AFTYGSWGVAMLLFAAVMVLV) threads the bilayer.

Belongs to the RL11 family.

It localises to the host membrane. This is an uncharacterized protein from Human cytomegalovirus (strain Merlin) (HHV-5).